Consider the following 299-residue polypeptide: Junctional adhesion molecule A (299 aa).

An N-terminal signal peptide occupies residues 1–27; sequence MGTKAQVERKLLCLFILAILLCSLALG. 2 consecutive Ig-like V-type domains span residues 28–125 and 135–228; these read SVTV…VKVK and PTVN…NAVR. The Extracellular segment spans residues 28–238; it reads SVTVHSSEPE…MEAVERNVGV (211 aa). Intrachain disulfides connect C50–C109 and C153–C212. An N-linked (GlcNAc...) asparagine glycan is attached at N185. A helical transmembrane segment spans residues 239–259; it reads IVAAVLVTLILLGILVFGIWF. The Cytoplasmic portion of the chain corresponds to 260 to 299; the sequence is AYSRGHFDRTKKGTSSKKVIYSQPSARSEGEFKQTSSFLV. Phosphoserine occurs at positions 281, 284, and 287.

This sequence belongs to the immunoglobulin superfamily. Interacts with the ninth PDZ domain of MPDZ. Interacts with the first PDZ domain of PARD3. The association between PARD3 and PARD6B probably disrupts this interaction. Interacts with ITGAL (via I-domain). Interacts with CD151. As to quaternary structure, (Microbial infection) Interacts with Mammalian reovirus sigma-1 capsid protein. In terms of assembly, (Microbial infection) Interacts with Human Rotavirus strain Wa vp4 capsid protein. Post-translationally, N-glycosylated. (Microbial infection) Cleaved by H.pylori virulence factor PqqE. Cleavage leads to altered tight junction functions. Expressed in endothelium, epithelium and leukocytes (at protein level).

It localises to the cell junction. The protein resides in the tight junction. The protein localises to the cell membrane. Its function is as follows. Seems to play a role in epithelial tight junction formation. Appears early in primordial forms of cell junctions and recruits PARD3. The association of the PARD6-PARD3 complex may prevent the interaction of PARD3 with JAM1, thereby preventing tight junction assembly. Plays a role in regulating monocyte transmigration involved in integrity of epithelial barrier. Ligand for integrin alpha-L/beta-2 involved in memory T-cell and neutrophil transmigration. Involved in platelet activation. In terms of biological role, (Microbial infection) Acts as a receptor for Mammalian reovirus sigma-1. Functionally, (Microbial infection) Acts as a receptor for Human Rotavirus strain Wa. This chain is Junctional adhesion molecule A (F11R), found in Homo sapiens (Human).